A 197-amino-acid polypeptide reads, in one-letter code: uncharacterized protein (197 aa).

Residues 1–10 (MKNNYTSLKS) are compositionally biased toward polar residues. 2 disordered regions span residues 1-46 (MKNN…PPYS) and 54-73 (LVPEDSSTGPTETANPNVER). Positions 18–37 (LKTGHEIDLEKGPLPEHNSE) are enriched in basic and acidic residues. Positions 58 to 69 (DSSTGPTETANP) are enriched in polar residues. 2 helical membrane-spanning segments follow: residues 83–105 (NIYSLLRLLIAVLAVSVVFFTAW) and 120–142 (AFFVLIGLTCLILLITMILEPGL).

Belongs to the WTF family.

It is found in the endoplasmic reticulum membrane. This is an uncharacterized protein from Schizosaccharomyces pombe (strain 972 / ATCC 24843) (Fission yeast).